The sequence spans 597 residues: Elongation factor 4 (597 aa).

Residues 2-184 (NNIRNFSIIA…ALIAKVPPPK (183 aa)) enclose the tr-type G domain. GTP-binding positions include 14–19 (DHGKST) and 131–134 (NKID).

Belongs to the TRAFAC class translation factor GTPase superfamily. Classic translation factor GTPase family. LepA subfamily.

Its subcellular location is the cell inner membrane. The enzyme catalyses GTP + H2O = GDP + phosphate + H(+). Required for accurate and efficient protein synthesis under certain stress conditions. May act as a fidelity factor of the translation reaction, by catalyzing a one-codon backward translocation of tRNAs on improperly translocated ribosomes. Back-translocation proceeds from a post-translocation (POST) complex to a pre-translocation (PRE) complex, thus giving elongation factor G a second chance to translocate the tRNAs correctly. Binds to ribosomes in a GTP-dependent manner. This is Elongation factor 4 from Herminiimonas arsenicoxydans.